The following is a 276-amino-acid chain: Formamidopyrimidine-DNA glycosylase (276 aa).

Pro2 functions as the Schiff-base intermediate with DNA in the catalytic mechanism. Residue Glu3 is the Proton donor of the active site. Lys60 acts as the Proton donor; for beta-elimination activity in catalysis. DNA-binding residues include His93 and Arg112. The FPG-type zinc finger occupies 240–274 (NVYGKKGEPCVTCGTILEKTVVGGRGTHYCPICQP). Arg264 (proton donor; for delta-elimination activity) is an active-site residue.

This sequence belongs to the FPG family. Monomer. Zn(2+) serves as cofactor.

It carries out the reaction Hydrolysis of DNA containing ring-opened 7-methylguanine residues, releasing 2,6-diamino-4-hydroxy-5-(N-methyl)formamidopyrimidine.. The enzyme catalyses 2'-deoxyribonucleotide-(2'-deoxyribose 5'-phosphate)-2'-deoxyribonucleotide-DNA = a 3'-end 2'-deoxyribonucleotide-(2,3-dehydro-2,3-deoxyribose 5'-phosphate)-DNA + a 5'-end 5'-phospho-2'-deoxyribonucleoside-DNA + H(+). In terms of biological role, involved in base excision repair of DNA damaged by oxidation or by mutagenic agents. Acts as a DNA glycosylase that recognizes and removes damaged bases. Has a preference for oxidized purines, such as 7,8-dihydro-8-oxoguanine (8-oxoG). Has AP (apurinic/apyrimidinic) lyase activity and introduces nicks in the DNA strand. Cleaves the DNA backbone by beta-delta elimination to generate a single-strand break at the site of the removed base with both 3'- and 5'-phosphates. This Bacillus anthracis protein is Formamidopyrimidine-DNA glycosylase.